The chain runs to 166 residues: Putative pre-16S rRNA nuclease (166 aa).

The tract at residues 1-24 (MPDTAAPTPDRPGPDDPGRGRRLG) is disordered.

The protein belongs to the YqgF nuclease family.

It localises to the cytoplasm. Functionally, could be a nuclease involved in processing of the 5'-end of pre-16S rRNA. The protein is Putative pre-16S rRNA nuclease of Mycobacteroides abscessus (strain ATCC 19977 / DSM 44196 / CCUG 20993 / CIP 104536 / JCM 13569 / NCTC 13031 / TMC 1543 / L948) (Mycobacterium abscessus).